The primary structure comprises 268 residues: Methionine aminopeptidase (268 aa).

A substrate-binding site is contributed by histidine 79. A divalent metal cation is bound by residues aspartate 97, aspartate 108, and histidine 172. Substrate is bound at residue histidine 179. A divalent metal cation contacts are provided by glutamate 205 and glutamate 236.

It belongs to the peptidase M24A family. Methionine aminopeptidase type 1 subfamily. As to quaternary structure, monomer. Co(2+) is required as a cofactor. Requires Zn(2+) as cofactor. Mn(2+) serves as cofactor. The cofactor is Fe(2+).

The enzyme catalyses Release of N-terminal amino acids, preferentially methionine, from peptides and arylamides.. In terms of biological role, removes the N-terminal methionine from nascent proteins. The N-terminal methionine is often cleaved when the second residue in the primary sequence is small and uncharged (Met-Ala-, Cys, Gly, Pro, Ser, Thr, or Val). Requires deformylation of the N(alpha)-formylated initiator methionine before it can be hydrolyzed. This chain is Methionine aminopeptidase, found in Haemophilus influenzae (strain ATCC 51907 / DSM 11121 / KW20 / Rd).